The sequence spans 521 residues: Envelope glycoprotein C homolog (521 aa).

A signal peptide spans 1-21 (MGPLGRAWLIAAIFAWALLSA). The Virion surface portion of the chain corresponds to 22–475 (RRGLAEEAEA…DASPGLIGSP (454 aa)). The interval 24-138 (GLAEEAEASP…PSKAPPKERK (115 aa)) is disordered. Positions 41–54 (PTETESSAGTTGAT) are enriched in low complexity. The span at 66-76 (EDSTPGATTPV) shows a compositional bias: polar residues. A glycan (N-linked (GlcNAc...) asparagine; by host) is linked at asparagine 111. The cysteines at positions 142 and 159 are disulfide-linked. Residues 155–227 (LYVHCGVADN…LGDNYIFPSP (73 aa)) enclose the Ig-like V-type domain. Residues asparagine 164 and asparagine 208 are each glycosylated (N-linked (GlcNAc...) asparagine; by host). 3 disulfides stabilise this stretch: cysteine 290–cysteine 351, cysteine 390–cysteine 447, and cysteine 394–cysteine 421. Residues 386-451 (GEAVCEARCV…PVDYTCTATG (66 aa)) form the Ig-like C2-type domain. A helical membrane pass occupies residues 476–496 (VLVSVVAVACGLGAVGLLLVA). Residues 497 to 521 (ASCLRRKARVIQPGLTRARALGSAP) lie on the Cytoplasmic side of the membrane.

This sequence belongs to the herpesviridae glycoprotein C family. In terms of assembly, interacts with host complement component C3; this interaction inhibits host immune response by disregulating complement cascade.

The protein localises to the virion membrane. Its function is as follows. Essential for the initial attachment to heparan sulfate moieties of the host cell surface proteoglycans. Plays also a role in host immune evasion by inhibiting the host complement cascade activation. The chain is Envelope glycoprotein C homolog (gC) from Bovine herpesvirus 1.1 (strain Cooper) (BoHV-1).